The sequence spans 267 residues: MLTITAINAFNDNYIWVLRQDSQQAVYVVDPGDANVVLDYLHAQRLSLAGILITHHHRDHTGGIAALTDHVKQTTGHDLAVYGPQSEDIQGINQPIEPTLSDSLTLPFIDAPVRILSVPGHTAGHIAYLVDDALFCGDTLFSAGCGRLFEGTPSQMWQSLSLLAALPDETRVYCAHEYTLSNLKFAQTVDTDNEALNAYVEEASTLRAQGKATIPSTIGLERAINPFLRPLSPTIVNSIKNQFCDQDLTKADELTCFTLLRQWKDIF.

Histidine 55, histidine 57, aspartate 59, histidine 60, histidine 121, aspartate 138, and histidine 176 together coordinate Zn(2+).

It belongs to the metallo-beta-lactamase superfamily. Glyoxalase II family. In terms of assembly, monomer. Zn(2+) is required as a cofactor.

The catalysed reaction is an S-(2-hydroxyacyl)glutathione + H2O = a 2-hydroxy carboxylate + glutathione + H(+). The protein operates within secondary metabolite metabolism; methylglyoxal degradation; (R)-lactate from methylglyoxal: step 2/2. In terms of biological role, thiolesterase that catalyzes the hydrolysis of S-D-lactoyl-glutathione to form glutathione and D-lactic acid. This is Hydroxyacylglutathione hydrolase from Shewanella sp. (strain ANA-3).